Here is a 147-residue protein sequence, read N- to C-terminus: Sentan (147 aa).

Residues 1–32 are disordered; sequence MGGCMHSTQDKSLHLEGDPNPSAAPTSTCAPR. The span at 8–17 shows a compositional bias: basic and acidic residues; that stretch reads TQDKSLHLEG.

This sequence belongs to the S-100 family.

It localises to the cell projection. Its subcellular location is the cilium. May be a component of the linker structure that bridges the ciliary membrane and peripheral singlet microtubules. The protein is Sentan (SNTN) of Homo sapiens (Human).